The sequence spans 137 residues: Large ribosomal subunit protein uL16 (137 aa).

The protein belongs to the universal ribosomal protein uL16 family. As to quaternary structure, part of the 50S ribosomal subunit.

Functionally, binds 23S rRNA and is also seen to make contacts with the A and possibly P site tRNAs. The sequence is that of Large ribosomal subunit protein uL16 from Rhodopseudomonas palustris (strain BisA53).